The primary structure comprises 116 residues: Ly-6/neurotoxin-like protein 1 (116 aa).

The first 20 residues, 1 to 20 (MTPLLTLILVVLMGLPLAQA), serve as a signal peptide directing secretion. A UPAR/Ly6 domain is found at 21–105 (LDCHVCAYNG…LATPATLALA (85 aa)). Cystine bridges form between cysteine 23–cysteine 46, cysteine 26–cysteine 33, cysteine 39–cysteine 64, cysteine 68–cysteine 85, and cysteine 86–cysteine 91. A lipid anchor (GPI-anchor amidated asparagine) is attached at asparagine 92. The propeptide at 93-116 (GAGLATPATLALAPILLATLWGLL) is removed in mature form.

As to quaternary structure, interacts with nAChRs containing alpha-4:beta-2 (CHRNA4:CHRNB2) and alpha-7 (CHRNA7) subunits. Interacts with CHRNA4 probably in the endoplasmic reticulum prior to nAChR pentameric assembly. Interacts with KCNA2/Potassium voltage-gated channel subfamily A member 2.

The protein resides in the cell membrane. It localises to the cell projection. It is found in the dendrite. The protein localises to the endoplasmic reticulum. In terms of biological role, acts in different tissues through interaction to nicotinic acetylcholine receptors (nAChRs). The proposed role as modulator of nAChR activity seems to be dependent on the nAChR subtype and stoichiometry, and to involve an effect on nAChR trafficking and its cell surface expression, and on single channel properties of the nAChR inserted in the plasma membrane. Modulates functional properties of nicotinic acetylcholine receptors (nAChRs) to prevent excessive excitation, and hence neurodegeneration. Enhances desensitization by increasing both the rate and extent of desensitization of alpha-4:beta-2-containing nAChRs and slowing recovery from desensitization. Promotes large amplitude ACh-evoked currents through alpha-4:beta-2 nAChRs. Is involved in regulation of the nAChR pentameric assembly in the endoplasmic reticulum. Shifts stoichiometry from high sensitivity alpha-4(2):beta-2(3) to low sensitivity alpha-4(3):beta-2(2) nAChR. In vitro modulates alpha-3:beta-4-containing nAChRs. Reduces cell surface expression of (alpha-3:beta-4)(2):beta-4 and (alpha-3:beta-4)(2):alpha-5 nAChRs suggesting an interaction with nAChR alpha-3(-):(+)beta-4 subunit interfaces and an allosteric mode. Corresponding single channel effects characterized by decreased unitary conductance, altered burst proportions and enhanced desensitization/inactivation seem to depend on nAChR alpha:alpha subunit interfaces and are greater in (alpha-3:beta-2)(2):alpha-3 when compared to (alpha-3:beta-2)(2):alpha-5 nAChRs. Prevents plasticity in the primary visual cortex late in life. In Pan troglodytes (Chimpanzee), this protein is Ly-6/neurotoxin-like protein 1.